We begin with the raw amino-acid sequence, 448 residues long: Extracellular serine protease (448 aa).

The first 20 residues, 1–20, serve as a signal peptide directing secretion; the sequence is MKLSHLSLAIISAITLAACG. The interval 87–109 is disordered; the sequence is KELENQASDDEVDPTKTGVVGNL.

This sequence belongs to the peptidase S17 family. It depends on a divalent metal cation as a cofactor.

Functionally, this enzyme is a chymotrypsin-like serine protease. Degrades a variety of substrates present in the skin and hoof of the sheep, including elastin, keratin, fibrinogen and collagen. It seems to play an important role in the pathogenesis of sheep footrot. This is Extracellular serine protease (prvA) from Dichelobacter nodosus (Bacteroides nodosus).